The primary structure comprises 128 residues: Sulfurtransferase TusD (128 aa).

Catalysis depends on cysteine 78, which acts as the Cysteine persulfide intermediate.

This sequence belongs to the DsrE/TusD family. Heterohexamer, formed by a dimer of trimers. The hexameric TusBCD complex contains 2 copies each of TusB, TusC and TusD. The TusBCD complex interacts with TusE.

It localises to the cytoplasm. In terms of biological role, part of a sulfur-relay system required for 2-thiolation of 5-methylaminomethyl-2-thiouridine (mnm(5)s(2)U) at tRNA wobble positions. Accepts sulfur from TusA and transfers it in turn to TusE. The polypeptide is Sulfurtransferase TusD (Escherichia coli O157:H7).